The following is a 163-amino-acid chain: Superoxide dismutase [Mn] (163 aa).

Residues H2, H50, D134, and H138 each coordinate Mn(2+).

This sequence belongs to the iron/manganese superoxide dismutase family. Mn(2+) serves as cofactor.

It catalyses the reaction 2 superoxide + 2 H(+) = H2O2 + O2. Destroys superoxide anion radicals which are normally produced within the cells and which are toxic to biological systems. The sequence is that of Superoxide dismutase [Mn] (sodA) from Mycobacterium kansasii.